The primary structure comprises 272 residues: Shikimate dehydrogenase (NADP(+)) (272 aa).

Residues 14–16 and Thr-61 each bind shikimate; that span reads SKS. Lys-65 acts as the Proton acceptor in catalysis. An NADP(+)-binding site is contributed by Glu-77. Asn-86 and Asp-102 together coordinate shikimate. NADP(+) contacts are provided by residues 126–130, 149–154, and Met-213; these read GAGGA and NRTASR. A shikimate-binding site is contributed by Tyr-215. Gly-237 is an NADP(+) binding site.

It belongs to the shikimate dehydrogenase family. Homodimer.

It catalyses the reaction shikimate + NADP(+) = 3-dehydroshikimate + NADPH + H(+). Its pathway is metabolic intermediate biosynthesis; chorismate biosynthesis; chorismate from D-erythrose 4-phosphate and phosphoenolpyruvate: step 4/7. In terms of biological role, involved in the biosynthesis of the chorismate, which leads to the biosynthesis of aromatic amino acids. Catalyzes the reversible NADPH linked reduction of 3-dehydroshikimate (DHSA) to yield shikimate (SA). This is Shikimate dehydrogenase (NADP(+)) from Salmonella schwarzengrund (strain CVM19633).